The chain runs to 420 residues: Probable aminotransferase aclI (420 aa).

An N6-(pyridoxal phosphate)lysine modification is found at K264.

The protein belongs to the class-I pyridoxal-phosphate-dependent aminotransferase family. It depends on pyridoxal 5'-phosphate as a cofactor.

Its pathway is mycotoxin biosynthesis. In terms of biological role, probable aminotransferase; part of the gene cluster that mediates the biosynthesis of aspirochlorine (or antibiotic A30641), an unusual halogenated spiro compound with distinctive antifungal properties due to selective inhibition of protein biosynthesis, and which is also active against bacteria, viruses, and murine tumor cells. The non-ribosomal peptide synthetase (NRPS) aclP is responsible the formation of the diketopiperazine (DKP) core from the condensation of 2 phenylalanine residues. One Phe residue is tailored into chlorotyrosine by hydroxylation and chlorination, whereas the second Phe undergoes an unprecedented C-C bond cleavage to be converted into glycine. After formation of the DKP, sulfur is incorporated into the DKP by conjugation with glutathione by aclG, followed by its stepwise degradation to the thiol by aclI, aclJ and aclK, and the dithiol oxidation by aclT. In addition, oxygenases (aclB, aclC, aclL and aclO) and O-methyltransferases (aclM and aclU) act as tailoring enzymes to produce the intermediate dechloroaspirochlorine. Ultimately, chlorination of dechloroaspirochlorine by the halogenase aclH is the last step in the aspirochlorine pathway. This chain is Probable aminotransferase aclI, found in Aspergillus oryzae (strain ATCC 42149 / RIB 40) (Yellow koji mold).